We begin with the raw amino-acid sequence, 507 residues long: 2,3-bisphosphoglycerate-independent phosphoglycerate mutase (507 aa).

Positions 13 and 63 each coordinate Mn(2+). The Phosphoserine intermediate role is filled by Ser63. Substrate is bound by residues His124, 153-154 (RD), Arg183, Arg189, 254-257 (RADR), and Lys330. Mn(2+) contacts are provided by Asp396, His400, Asp437, His438, and His456.

This sequence belongs to the BPG-independent phosphoglycerate mutase family. As to quaternary structure, monomer. Requires Mn(2+) as cofactor.

It catalyses the reaction (2R)-2-phosphoglycerate = (2R)-3-phosphoglycerate. The protein operates within carbohydrate degradation; glycolysis; pyruvate from D-glyceraldehyde 3-phosphate: step 3/5. Its function is as follows. Catalyzes the interconversion of 2-phosphoglycerate and 3-phosphoglycerate. This Paracoccus denitrificans (strain Pd 1222) protein is 2,3-bisphosphoglycerate-independent phosphoglycerate mutase.